The sequence spans 192 residues: Ion-translocating oxidoreductase complex subunit B (192 aa).

The interval 1–26 (MNAIWIAVAAVSLLGLAFGAILGYAS) is hydrophobic. A 4Fe-4S domain is found at 32–91 (EDDPVVEKIDEILPQSQCGQCGYPGCRPYAEAISCNGEKINRCAPGGEAVMLKIAELLNV). 12 residues coordinate [4Fe-4S] cluster: Cys49, Cys52, Cys57, Cys74, Cys117, Cys120, Cys123, Cys127, Cys147, Cys150, Cys153, and Cys157. 4Fe-4S ferredoxin-type domains lie at 108–137 (MVAV…GATR) and 138–167 (AMHT…LQPV).

The protein belongs to the 4Fe4S bacterial-type ferredoxin family. RnfB subfamily. In terms of assembly, the complex is composed of six subunits: RsxA, RsxB, RsxC, RsxD, RsxE and RsxG. Requires [4Fe-4S] cluster as cofactor.

It is found in the cell inner membrane. Part of a membrane-bound complex that couples electron transfer with translocation of ions across the membrane. Required to maintain the reduced state of SoxR. This chain is Ion-translocating oxidoreductase complex subunit B, found in Escherichia coli O139:H28 (strain E24377A / ETEC).